Reading from the N-terminus, the 339-residue chain is DNA-directed RNA polymerase subunit alpha (339 aa).

Residues 1-233 form an alpha N-terminal domain (alpha-NTD) region; the sequence is MVREEITGST…DLFLPFIHTE (233 aa). The tract at residues 266 to 339 is alpha C-terminal domain (alpha-CTD); sequence GIPLNCIFID…IDLPKNKFSL (74 aa).

The protein belongs to the RNA polymerase alpha chain family. As to quaternary structure, in plastids the minimal PEP RNA polymerase catalytic core is composed of four subunits: alpha, beta, beta', and beta''. When a (nuclear-encoded) sigma factor is associated with the core the holoenzyme is formed, which can initiate transcription.

Its subcellular location is the plastid. It localises to the chloroplast. It catalyses the reaction RNA(n) + a ribonucleoside 5'-triphosphate = RNA(n+1) + diphosphate. In terms of biological role, DNA-dependent RNA polymerase catalyzes the transcription of DNA into RNA using the four ribonucleoside triphosphates as substrates. In Saccharum hybrid (Sugarcane), this protein is DNA-directed RNA polymerase subunit alpha.